Here is a 203-residue protein sequence, read N- to C-terminus: Holliday junction branch migration complex subunit RuvA (203 aa).

The domain I stretch occupies residues 1–64 (MIGRLRGIIL…EDAQLLYGFN (64 aa)). The domain II stretch occupies residues 65–142 (NKQERMLFRE…KGLHGDLFTP (78 aa)). The interval 143–154 (AADLVLTSPNGP) is flexible linker. A domain III region spans residues 155-203 (TSDDAEQEAVAALVALGYKPQEASRMVSKIAKPDANSETLIREALRAAL).

The protein belongs to the RuvA family. As to quaternary structure, homotetramer. Forms an RuvA(8)-RuvB(12)-Holliday junction (HJ) complex. HJ DNA is sandwiched between 2 RuvA tetramers; dsDNA enters through RuvA and exits via RuvB. An RuvB hexamer assembles on each DNA strand where it exits the tetramer. Each RuvB hexamer is contacted by two RuvA subunits (via domain III) on 2 adjacent RuvB subunits; this complex drives branch migration. In the full resolvosome a probable DNA-RuvA(4)-RuvB(12)-RuvC(2) complex forms which resolves the HJ.

The protein localises to the cytoplasm. Its function is as follows. The RuvA-RuvB-RuvC complex processes Holliday junction (HJ) DNA during genetic recombination and DNA repair, while the RuvA-RuvB complex plays an important role in the rescue of blocked DNA replication forks via replication fork reversal (RFR). RuvA specifically binds to HJ cruciform DNA, conferring on it an open structure. The RuvB hexamer acts as an ATP-dependent pump, pulling dsDNA into and through the RuvAB complex. HJ branch migration allows RuvC to scan DNA until it finds its consensus sequence, where it cleaves and resolves the cruciform DNA. The sequence is that of Holliday junction branch migration complex subunit RuvA from Enterobacter sp. (strain 638).